A 270-amino-acid chain; its full sequence is D-aminoacyl-tRNA deacylase (270 aa).

Belongs to the DtdA deacylase family. As to quaternary structure, monomer. It depends on Zn(2+) as a cofactor.

The enzyme catalyses a D-aminoacyl-tRNA + H2O = a tRNA + a D-alpha-amino acid + H(+). It catalyses the reaction glycyl-tRNA(Ala) + H2O = tRNA(Ala) + glycine + H(+). In terms of biological role, D-aminoacyl-tRNA deacylase with broad substrate specificity. By recycling D-aminoacyl-tRNA to D-amino acids and free tRNA molecules, this enzyme counteracts the toxicity associated with the formation of D-aminoacyl-tRNA entities in vivo. In Pyrococcus furiosus (strain ATCC 43587 / DSM 3638 / JCM 8422 / Vc1), this protein is D-aminoacyl-tRNA deacylase.